The primary structure comprises 122 residues: Histone H2B type 2-K1 (122 aa).

A disordered region spans residues 1 to 30 (MSAEYGQRQQPGGRGGRSSGNKKSKKRCRR). Positions 20 to 30 (GNKKSKKRCRR) are enriched in basic residues. Lys31 is modified (N6-(2-hydroxyisobutyryl)lysine; alternate). Lys31 is modified (N6-(beta-hydroxybutyryl)lysine; alternate). Lys31 is subject to N6-crotonyllysine; alternate. Position 31 is an N6-glutaryllysine; alternate (Lys31). Lys31 bears the N6-succinyllysine; alternate mark. A Glycyl lysine isopeptide (Lys-Gly) (interchain with G-Cter in ubiquitin); alternate cross-link involves residue Lys31. Ser33 carries the post-translational modification Phosphoserine. Residues Lys40, Lys43, and Lys54 each carry the N6-(2-hydroxyisobutyryl)lysine; alternate modification. 2 positions are modified to N6-glutaryllysine; alternate: Lys40 and Lys43. At Lys40 the chain carries N6-lactoyllysine; alternate. Lys43 is modified (N6-methyllysine). Lys43 is modified (N6-methyllysine; alternate). N6,N6-dimethyllysine is present on Lys54. Lys54 is modified (N6,N6-dimethyllysine; alternate). A Dimethylated arginine modification is found at Arg76. Ser81 carries the phosphoserine modification. Omega-N-methylarginine is present on residues Arg83 and Arg89. Lys105 carries the post-translational modification N6-(2-hydroxyisobutyryl)lysine; alternate. At Lys105 the chain carries N6-glutaryllysine; alternate. Position 105 is an N6-lactoyllysine; alternate (Lys105). N6-methyllysine is present on Lys105. Lys105 bears the N6-methyllysine; alternate mark. An O-linked (GlcNAc) serine glycan is attached at Ser109. The residue at position 112 (Thr112) is a Phosphothreonine. 2 positions are modified to N6-(2-hydroxyisobutyryl)lysine; alternate: Lys113 and Lys117. An N6-(beta-hydroxybutyryl)lysine; alternate mark is found at Lys113 and Lys117. 2 positions are modified to N6-glutaryllysine; alternate: Lys113 and Lys117. Residues Lys113 and Lys117 each carry the N6-succinyllysine; alternate modification. Lys113 is subject to N6-lactoyllysine; alternate. Position 113 is an N6-malonyllysine; alternate (Lys113). Lys113 bears the N6-methylated lysine; alternate mark. A Glycyl lysine isopeptide (Lys-Gly) (interchain with G-Cter in ubiquitin); alternate cross-link involves residue Lys117.

The protein belongs to the histone H2B family. In terms of assembly, the nucleosome is a histone octamer containing two molecules each of H2A, H2B, H3 and H4 assembled in one H3-H4 heterotetramer and two H2A-H2B heterodimers. The octamer wraps approximately 147 bp of DNA.

It localises to the chromosome. The protein localises to the nucleus. Core component of nucleosome. Nucleosomes wrap and compact DNA into chromatin, limiting DNA accessibility to the cellular machineries which require DNA as a template. Histones thereby play a central role in transcription regulation, DNA repair, DNA replication and chromosomal stability. DNA accessibility is regulated via a complex set of post-translational modifications of histones, also called histone code, and nucleosome remodeling. This Homo sapiens (Human) protein is Histone H2B type 2-K1.